The sequence spans 971 residues: Piwi-like protein 2 (971 aa).

A Symmetric dimethylarginine modification is found at R45. Residue R74 is modified to Omega-N-methylarginine; by PRMT5; alternate. At R74 the chain carries Symmetric dimethylarginine; by PRMT5; alternate. R83 is modified (omega-N-methylarginine; alternate). Symmetric dimethylarginine; alternate is present on residues R83 and R95. R95 is subject to Omega-N-methylarginine; by PRMT5; alternate. The residue at position 100 (R100) is a Symmetric dimethylarginine; by PRMT5; alternate. R100 carries the post-translational modification Omega-N-methylarginine; alternate. The tract at residues 102 to 124 is disordered; that stretch reads LSANMVRKDREEPRSSLPDPSVL. A symmetric dimethylarginine mark is found at R144 and R156. Positions 159–200 are disordered; it reads SSIGRGMDKPPSAFGLTARDPPRLPQPPALSPTSLHSADPPP. R163 is subject to Symmetric dimethylarginine; by PRMT5. One can recognise a PAZ domain in the interval 387–500; it reads SVLDVMHAIY…LLPELSFMTG (114 aa). Position 549 is a symmetric dimethylarginine; by PRMT5 (R549). The Piwi domain occupies 666–957; that stretch reads MVVCIIMGTR…LAFLSGQILH (292 aa). Active-site residues include D743, E781, D813, and H946.

It belongs to the argonaute family. Piwi subfamily. As to quaternary structure, interacts with DDX4, MAEL, EIF3A, EIF4E, EIF4G, PRMT5 and WDR77. Associates with EIF4E- and EIF4G-containing m7G cap-binding complexes. Interacts (when methylated on arginine residues) with TDRD1 and TDRKH/TDRD2. Interacts with TDRD12. Component of the PET complex, at least composed of EXD1, PIWIL2, TDRD12 and piRNAs. Interacts with MOV10L1. Interacts with GPAT2. Interacts with Tex19.1 and, probably, Tex19.2. Interacts (via PIWI domain) with BMAL1 and CLOCK. Interacts with GSK3B. Interacts with TEX15. Mg(2+) serves as cofactor. Arginine methylation by PRMT5 is required for the interaction with Tudor domain-containing protein TDRD1 and subsequent localization to the meiotic nuage, also named P granule. Expressed in adult testis, specifically in spermatocytes and in spermatogonia. Only detected in primordial germ cells of both sexes. Widely expressed in tumors. Also present at early stages of oocyte growth. Present in the mitotic spermatogonia. Not detected in the first stages of meiosis (preleptotene and leptotene). Detected at the late zygotene stage and increases throughout pachytene, declining from this stage onward until expression stops at the early round spermatid stage (at protein level).

It localises to the cytoplasm. Its function is as follows. Endoribonuclease that plays a central role during spermatogenesis by repressing transposable elements and preventing their mobilization, which is essential for the germline integrity. Plays an essential role in meiotic differentiation of spermatocytes, germ cell differentiation and in self-renewal of spermatogonial stem cells. Its presence in oocytes suggests that it may participate in similar functions during oogenesis in females. Acts via the piRNA metabolic process, which mediates the repression of transposable elements during meiosis by forming complexes composed of piRNAs and Piwi proteins and govern the methylation and subsequent repression of transposons. During piRNA biosynthesis, plays a key role in the piRNA amplification loop, also named ping-pong amplification cycle, by acting as a 'slicer-competent' piRNA endoribonuclease that cleaves primary piRNAs, which are then loaded onto 'slicer-incompetent' PIWIL4. PIWIL2 slicing produces a pre-miRNA intermediate, which is then processed in mature piRNAs, and as well as a 16 nucleotide by-product that is degraded. Required for PIWIL4/MIWI2 nuclear localization and association with secondary piRNAs antisense. Besides their function in transposable elements repression, piRNAs are probably involved in other processes during meiosis such as translation regulation. Indirectly modulates expression of genes such as PDGFRB, SLC2A1, ITGA6, GJA7, THY1, CD9 and STRA8. Represses circadian rhythms by promoting the stability and activity of core clock components BMAL1 and CLOCK by inhibiting GSK3B-mediated phosphorylation and ubiquitination-dependent degradation of these proteins. The protein is Piwi-like protein 2 of Mus musculus (Mouse).